Here is a 283-residue protein sequence, read N- to C-terminus: Protein/nucleic acid deglycase HchA (283 aa).

Zn(2+)-binding residues include His-86, Glu-91, and His-123. Cys-185 acts as the Nucleophile in catalysis.

It belongs to the peptidase C56 family. HchA subfamily. Homodimer.

The protein resides in the cytoplasm. It catalyses the reaction N(omega)-(1-hydroxy-2-oxopropyl)-L-arginyl-[protein] + H2O = lactate + L-arginyl-[protein] + H(+). The catalysed reaction is N(6)-(1-hydroxy-2-oxopropyl)-L-lysyl-[protein] + H2O = lactate + L-lysyl-[protein] + H(+). It carries out the reaction S-(1-hydroxy-2-oxopropyl)-L-cysteinyl-[protein] + H2O = lactate + L-cysteinyl-[protein] + H(+). The enzyme catalyses N(omega)-(1-hydroxy-2-oxoethyl)-L-arginyl-[protein] + H2O = L-arginyl-[protein] + glycolate + H(+). It catalyses the reaction N(6)-(1-hydroxy-2-oxoethyl)-L-lysyl-[protein] + H2O = glycolate + L-lysyl-[protein] + H(+). The catalysed reaction is S-(1-hydroxy-2-oxoethyl)-L-cysteinyl-[protein] + H2O = glycolate + L-cysteinyl-[protein] + H(+). It carries out the reaction N(2)-(1-hydroxy-2-oxopropyl)-dGTP + H2O = lactate + dGTP + H(+). The enzyme catalyses N(2)-(1-hydroxy-2-oxopropyl)-GTP + H2O = lactate + GTP + H(+). It catalyses the reaction N(2)-(1-hydroxy-2-oxopropyl)-GDP + H2O = lactate + GDP + H(+). The catalysed reaction is N(2)-(1-hydroxy-2-oxopropyl)-GMP + H2O = lactate + GMP + H(+). It carries out the reaction N(2)-(1-hydroxy-2-oxoethyl)-dGTP + H2O = dGTP + glycolate + H(+). The enzyme catalyses N(2)-(1-hydroxy-2-oxoethyl)-GTP + H2O = glycolate + GTP + H(+). It catalyses the reaction N(2)-(1-hydroxy-2-oxoethyl)-GDP + H2O = glycolate + GDP + H(+). The catalysed reaction is N(2)-(1-hydroxy-2-oxoethyl)-GMP + H2O = glycolate + GMP + H(+). It carries out the reaction an N(2)-(1-hydroxy-2-oxopropyl)-guanosine in RNA + H2O = a guanosine in RNA + lactate + H(+). The enzyme catalyses an N(2)-(1-hydroxy-2-oxopropyl)-2'-deoxyguanosine in DNA + H2O = a 2'-deoxyguanosine in DNA + lactate + H(+). It catalyses the reaction an N(2)-(1-hydroxy-2-oxoethyl)-guanosine in RNA + H2O = a guanosine in RNA + glycolate + H(+). The catalysed reaction is an N(2)-(1-hydroxy-2-oxoethyl)-2'-deoxyguanosine in DNA + H2O = a 2'-deoxyguanosine in DNA + glycolate + H(+). In terms of biological role, protein and nucleotide deglycase that catalyzes the deglycation of the Maillard adducts formed between amino groups of proteins or nucleotides and reactive carbonyl groups of glyoxals. Thus, functions as a protein deglycase that repairs methylglyoxal- and glyoxal-glycated proteins, and releases repaired proteins and lactate or glycolate, respectively. Deglycates cysteine, arginine and lysine residues in proteins, and thus reactivates these proteins by reversing glycation by glyoxals. Acts on early glycation intermediates (hemithioacetals and aminocarbinols), preventing the formation of Schiff bases and advanced glycation endproducts (AGE). Also functions as a nucleotide deglycase able to repair glycated guanine in the free nucleotide pool (GTP, GDP, GMP, dGTP) and in DNA and RNA. Is thus involved in a major nucleotide repair system named guanine glycation repair (GG repair), dedicated to reversing methylglyoxal and glyoxal damage via nucleotide sanitization and direct nucleic acid repair. Plays an important role in protecting cells from carbonyl stress. This Escherichia coli O157:H7 protein is Protein/nucleic acid deglycase HchA.